We begin with the raw amino-acid sequence, 375 residues long: Chaperone protein DnaJ (375 aa).

A J domain is found at 5-70; it reads DYYEVLGVAR…NKRRAYDAHG (66 aa). The CR-type zinc finger occupies 131–208; sequence GIERRIEIPT…CHGAGRVEED (78 aa). Residues C144, C147, C160, C163, C182, C185, C196, and C199 each coordinate Zn(2+). 4 CXXCXGXG motif repeats span residues 144–151, 160–167, 182–189, and 196–203; these read CAPCHGSG, CGTCHGRG, CPHCDGRG, and CKTCHGAG.

The protein belongs to the DnaJ family. In terms of assembly, homodimer. The cofactor is Zn(2+).

It localises to the cytoplasm. Participates actively in the response to hyperosmotic and heat shock by preventing the aggregation of stress-denatured proteins and by disaggregating proteins, also in an autonomous, DnaK-independent fashion. Unfolded proteins bind initially to DnaJ; upon interaction with the DnaJ-bound protein, DnaK hydrolyzes its bound ATP, resulting in the formation of a stable complex. GrpE releases ADP from DnaK; ATP binding to DnaK triggers the release of the substrate protein, thus completing the reaction cycle. Several rounds of ATP-dependent interactions between DnaJ, DnaK and GrpE are required for fully efficient folding. Also involved, together with DnaK and GrpE, in the DNA replication of plasmids through activation of initiation proteins. In Xanthomonas euvesicatoria pv. vesicatoria (strain 85-10) (Xanthomonas campestris pv. vesicatoria), this protein is Chaperone protein DnaJ.